The following is a 603-amino-acid chain: Sorting nexin-41 (603 aa).

The disordered stretch occupies residues 1–36 (MNSFRESDEEDNNPFSGTNHLYASGIGAVPEGDDDF). The PX domain occupies 121 to 241 (AEGSLGALRI…QKFLNPEYIW (121 aa)). A 1,2-diacyl-sn-glycero-3-phospho-(1D-myo-inositol-3-phosphate) contacts are provided by Arg159, Ser161, Lys185, and Arg208.

This sequence belongs to the sorting nexin family.

The protein localises to the endosome membrane. It localises to the endomembrane system. May be required for cytoplasm to vacuole transport (Cvt) and pexophagy. The chain is Sorting nexin-41 (SNX41) from Eremothecium gossypii (strain ATCC 10895 / CBS 109.51 / FGSC 9923 / NRRL Y-1056) (Yeast).